The following is a 261-amino-acid chain: Small ribosomal subunit protein uS2 (261 aa).

This sequence belongs to the universal ribosomal protein uS2 family.

This Streptococcus mutans serotype c (strain ATCC 700610 / UA159) protein is Small ribosomal subunit protein uS2.